Reading from the N-terminus, the 835-residue chain is MPLSYQHFRKLLLLDEGDPLEDALPRLADEDLNRRVAEGLNLQHLPVSIPWTHKVGPFSGLYSVSTLTFNPQWKTPQFPLIHLKEDLIPFIESYFGPLTSNEKRRLKLVLPARFYPKATKYFPLEKGIKPHYPNDVVNHYYQVQHYLHTLWEAGVLYKRETTHSASFFGTPYTWEHKLQHGTQPVNVQPAGILSQSSAGPPVQGQCRLSRLGQKSKQGPLATSPRHGSGGLWSRTSATPWRPSGVEFTSSGFVCHSARHPSSSINQSRQRKETNTSYSSSERHSPTSHDLEHVLLPELSSESKGQRPLLSCWWLNFKHCQPCSDHCLHHIVKLLDDWGPCQHHGHHFIRIPRTPSRITGGVFLVDKNPHNATESRLVVDFSQFSRGNTSVSWPKFAVPNLQSLTNLLSTDLSWVSLDVFAAFYHLPLHPASMPHLLVGSSGLPRYVARVSSSTNSYRNNNNNGTLQDLHANCSRHLFVSLMLLYQTYGRKLHLYSHPLIMGFRKVPMGLGLSPFLLAQFTSAICSVVRRAFPHCMAFSYMDDVVLGAKSVQHLESLLASVTTFLLALGIHLNPEKTKRWGKALNFMGYVIGGYGSLPQQHIRDKIALCFQKLPCNRPIDWKVCQRIVGLLGFVAPFTQCGYAALMPIYTCIQKHQAFTFSLVYKTFLKDQYMHLYPVARQRAGHCQVFADATPTGWGLVMGNQRMRGTFLSPLPIHTAELLAACFARCWSGAKLIGTDNAVVLSRKYTHFPWLLGCAATWILRGTCFVYVPSKLNPADDPSRGCLGLLKPLPRLLFQPSTGRTSLYAVSPPVPFHRPGRVLFASPLQPGDAWRPP.

A terminal protein domain (TP) region spans residues 1 to 176 (MPLSYQHFRK…FFGTPYTWEH (176 aa)). The interval 177 to 334 (KLQHGTQPVN…HCLHHIVKLL (158 aa)) is spacer. Disordered regions lie at residues 211 to 235 (LGQK…WSRT) and 258 to 288 (RHPS…PTSH). The interval 335 to 680 (DDWGPCQHHG…YMHLYPVARQ (346 aa)) is polymerase/reverse transcriptase domain (RT). The Reverse transcriptase domain maps to 345–590 (HHFIRIPRTP…KALNFMGYVI (246 aa)). Mg(2+) is bound by residues aspartate 417, aspartate 541, and aspartate 542.

This sequence belongs to the hepadnaviridae P protein family.

The enzyme catalyses DNA(n) + a 2'-deoxyribonucleoside 5'-triphosphate = DNA(n+1) + diphosphate. It carries out the reaction Endonucleolytic cleavage to 5'-phosphomonoester.. With respect to regulation, activated by host HSP70 and HSP40 in vitro to be able to bind the epsilon loop of the pgRNA. Because deletion of the RNase H region renders the protein partly chaperone-independent, the chaperones may be needed indirectly to relieve occlusion of the RNA-binding site by this domain. Inhibited by several reverse-transcriptase inhibitors: Lamivudine, Adefovir and Entecavir. Functionally, multifunctional enzyme that converts the viral RNA genome into dsDNA in viral cytoplasmic capsids. This enzyme displays a DNA polymerase activity that can copy either DNA or RNA templates, and a ribonuclease H (RNase H) activity that cleaves the RNA strand of RNA-DNA heteroduplexes in a partially processive 3'- to 5'-endonucleasic mode. Neo-synthesized pregenomic RNA (pgRNA) are encapsidated together with the P protein, and reverse-transcribed inside the nucleocapsid. Initiation of reverse-transcription occurs first by binding the epsilon loop on the pgRNA genome, and is initiated by protein priming, thereby the 5'-end of (-)DNA is covalently linked to P protein. Partial (+)DNA is synthesized from the (-)DNA template and generates the relaxed circular DNA (RC-DNA) genome. After budding and infection, the RC-DNA migrates in the nucleus, and is converted into a plasmid-like covalently closed circular DNA (cccDNA). The activity of P protein does not seem to be necessary for cccDNA generation, and is presumably released from (+)DNA by host nuclear DNA repair machinery. This is Protein P from Woolly monkey hepatitis B virus (isolate Louisville) (WMHBV).